Here is a 162-residue protein sequence, read N- to C-terminus: Phenazine biosynthesis protein PhzA1 (162 aa).

It belongs to the PhzA/PhzB family.

It participates in antibiotic biosynthesis; phenazine biosynthesis. In terms of biological role, involved in the biosynthesis of the antibiotic phenazine, a nitrogen-containing heterocyclic molecule. PhzA1 (operon phzA1B1C1E1F1G1) has a role in the biosynthesis of the phenazine during planktonic growth. This Pseudomonas aeruginosa (strain ATCC 15692 / DSM 22644 / CIP 104116 / JCM 14847 / LMG 12228 / 1C / PRS 101 / PAO1) protein is Phenazine biosynthesis protein PhzA1.